A 354-amino-acid polypeptide reads, in one-letter code: Nicotinate-nucleotide--dimethylbenzimidazole phosphoribosyltransferase (354 aa).

Residue E313 is the Proton acceptor of the active site.

Belongs to the CobT family.

The catalysed reaction is 5,6-dimethylbenzimidazole + nicotinate beta-D-ribonucleotide = alpha-ribazole 5'-phosphate + nicotinate + H(+). The protein operates within nucleoside biosynthesis; alpha-ribazole biosynthesis; alpha-ribazole from 5,6-dimethylbenzimidazole: step 1/2. Its function is as follows. Catalyzes the synthesis of alpha-ribazole-5'-phosphate from nicotinate mononucleotide (NAMN) and 5,6-dimethylbenzimidazole (DMB). The sequence is that of Nicotinate-nucleotide--dimethylbenzimidazole phosphoribosyltransferase from Ralstonia nicotianae (strain ATCC BAA-1114 / GMI1000) (Ralstonia solanacearum).